Consider the following 231-residue polypeptide: MKRAVVVFSGGQDSTTCLAQARHQYDEVHCVTFDYGQRHRAEIDVARELALKLGARAHKVLDVTLLNELAVSSLTRDSIPVPDYEPNADGIPNTFVPGRNILFLTLAAIYAYQVKAEAVITGVCETDFSGYPDCRDEFVKALNHAVNLGMAKDIRFETPLMWIDKAETWALADYWGQLDLVREETLTCYNGIKGDGCGHCAACNLRANGLNHYLSNKAAVMAAMKQKTGLR.

8–18 (FSGGQDSTTCL) is an ATP binding site. 4 residues coordinate Zn(2+): cysteine 188, cysteine 197, cysteine 200, and cysteine 203.

This sequence belongs to the QueC family. It depends on Zn(2+) as a cofactor.

It carries out the reaction 7-carboxy-7-deazaguanine + NH4(+) + ATP = 7-cyano-7-deazaguanine + ADP + phosphate + H2O + H(+). It functions in the pathway purine metabolism; 7-cyano-7-deazaguanine biosynthesis. In terms of biological role, catalyzes the ATP-dependent conversion of 7-carboxy-7-deazaguanine (CDG) to 7-cyano-7-deazaguanine (preQ(0)). The sequence is that of 7-cyano-7-deazaguanine synthase from Salmonella choleraesuis (strain SC-B67).